The chain runs to 157 residues: Serine-protein kinase RsbW (157 aa).

The protein belongs to the anti-sigma-factor family.

The catalysed reaction is L-seryl-[protein] + ATP = O-phospho-L-seryl-[protein] + ADP + H(+). The enzyme catalyses L-threonyl-[protein] + ATP = O-phospho-L-threonyl-[protein] + ADP + H(+). Negative regulator of sigma-B activity. Phosphorylates and inactivates its specific antagonist protein, RsbV. Upon phosphorylation of RsbV, RsbW is released and binds to sigma-B, thereby blocking its ability to form an RNA polymerase holoenzyme (E-sigma-B). The protein is Serine-protein kinase RsbW of Listeria monocytogenes serotype 4b (strain CLIP80459).